The sequence spans 523 residues: GMP synthase [glutamine-hydrolyzing] (523 aa).

The 198-residue stretch at 8–205 folds into the Glutamine amidotransferase type-1 domain; that stretch reads KILILDFGSQ…VVGICGCECK (198 aa). The active-site Nucleophile is C85. Active-site residues include H179 and E181. Residues 206–398 enclose the GMPS ATP-PPase domain; that stretch reads WTAENIIERR…LGLPAEMLNR (193 aa). ATP is bound at residue 233-239; the sequence is SGGVDSS.

Homodimer.

It carries out the reaction XMP + L-glutamine + ATP + H2O = GMP + L-glutamate + AMP + diphosphate + 2 H(+). Its pathway is purine metabolism; GMP biosynthesis; GMP from XMP (L-Gln route): step 1/1. Functionally, catalyzes the synthesis of GMP from XMP. This Actinobacillus pleuropneumoniae serotype 5b (strain L20) protein is GMP synthase [glutamine-hydrolyzing].